The primary structure comprises 89 residues: Cell division topological specificity factor (89 aa).

The protein belongs to the MinE family.

Functionally, prevents the cell division inhibition by proteins MinC and MinD at internal division sites while permitting inhibition at polar sites. This ensures cell division at the proper site by restricting the formation of a division septum at the midpoint of the long axis of the cell. The chain is Cell division topological specificity factor from Sodalis glossinidius (strain morsitans).